Here is a 506-residue protein sequence, read N- to C-terminus: Apolipoprotein N-acyltransferase (506 aa).

Transmembrane regions (helical) follow at residues 10–30, 33–53, 57–77, 105–125, 139–159, 176–196, and 205–225; these read ANAK…AGWG, LALP…PLWW, VLAP…FYGS, IWLC…LLMA, WGVT…LWWI, LAGP…VTLS, and VGLA…SVRV. One can recognise a CN hydrolase domain in the interval 238-473; it reads IQGNIPTREK…FVIYAATIFR (236 aa). Residue Glu-279 is the Proton acceptor of the active site. Lys-336 is an active-site residue. The active-site Nucleophile is Cys-385. A helical transmembrane segment spans residues 483–500; sequence YGDWLLPLLLGMLSLSVL.

It belongs to the CN hydrolase family. Apolipoprotein N-acyltransferase subfamily.

The protein localises to the cell inner membrane. It catalyses the reaction N-terminal S-1,2-diacyl-sn-glyceryl-L-cysteinyl-[lipoprotein] + a glycerophospholipid = N-acyl-S-1,2-diacyl-sn-glyceryl-L-cysteinyl-[lipoprotein] + a 2-acyl-sn-glycero-3-phospholipid + H(+). It functions in the pathway protein modification; lipoprotein biosynthesis (N-acyl transfer). Catalyzes the phospholipid dependent N-acylation of the N-terminal cysteine of apolipoprotein, the last step in lipoprotein maturation. The polypeptide is Apolipoprotein N-acyltransferase (Thermosynechococcus vestitus (strain NIES-2133 / IAM M-273 / BP-1)).